Here is a 31-residue protein sequence, read N- to C-terminus: Photosystem II reaction center protein T (31 aa).

The chain crosses the membrane as a helical span at residues 3–23 (SVAYILILTMALAVLFFAIAF).

Belongs to the PsbT family. As to quaternary structure, PSII is composed of 1 copy each of membrane proteins PsbA, PsbB, PsbC, PsbD, PsbE, PsbF, PsbH, PsbI, PsbJ, PsbK, PsbL, PsbM, PsbT, PsbX, PsbY, PsbZ, Psb30/Ycf12, peripheral proteins PsbO, CyanoQ (PsbQ), PsbU, PsbV and a large number of cofactors. It forms dimeric complexes.

The protein resides in the cellular thylakoid membrane. In terms of biological role, found at the monomer-monomer interface of the photosystem II (PS II) dimer, plays a role in assembly and dimerization of PSII. PSII is a light-driven water plastoquinone oxidoreductase, using light energy to abstract electrons from H(2)O, generating a proton gradient subsequently used for ATP formation. The chain is Photosystem II reaction center protein T from Gloeothece citriformis (strain PCC 7424) (Cyanothece sp. (strain PCC 7424)).